The chain runs to 141 residues: Putative antirestriction protein YubI (141 aa).

This sequence belongs to the antirestriction protein family.

This is Putative antirestriction protein YubI (yubI) from Escherichia coli (strain K12).